A 121-amino-acid polypeptide reads, in one-letter code: UPF0344 protein BT9727_1053 (121 aa).

A run of 4 helical transmembrane segments spans residues 6 to 26 (ITAW…YSAG), 38 to 58 (LMYI…MKTA), 65 to 85 (WYGL…MVLV), and 92 to 112 (ATGA…YLGL).

This sequence belongs to the UPF0344 family.

Its subcellular location is the cell membrane. The protein is UPF0344 protein BT9727_1053 of Bacillus thuringiensis subsp. konkukian (strain 97-27).